Reading from the N-terminus, the 144-residue chain is Large ribosomal subunit protein uL11 (144 aa).

The protein belongs to the universal ribosomal protein uL11 family. Part of the ribosomal stalk of the 50S ribosomal subunit. Interacts with L10 and the large rRNA to form the base of the stalk. L10 forms an elongated spine to which L12 dimers bind in a sequential fashion forming a multimeric L10(L12)X complex. In terms of processing, one or more lysine residues are methylated.

Its function is as follows. Forms part of the ribosomal stalk which helps the ribosome interact with GTP-bound translation factors. The sequence is that of Large ribosomal subunit protein uL11 from Saccharopolyspora erythraea (strain ATCC 11635 / DSM 40517 / JCM 4748 / NBRC 13426 / NCIMB 8594 / NRRL 2338).